We begin with the raw amino-acid sequence, 711 residues long: Catalase HPII (711 aa).

A compositionally biased stretch (basic and acidic residues) spans 1–10 (MPSKKTDAPK). The segment at 1–27 (MPSKKTDAPKQSEAAGTQTPDRANTNA) is disordered. Positions 14-27 (AAGTQTPDRANTNA) are enriched in polar residues. Active-site residues include histidine 92 and asparagine 165. Position 379 (tyrosine 379) interacts with heme.

Belongs to the catalase family. HPII subfamily. It depends on heme as a cofactor.

The protein localises to the cytoplasm. The enzyme catalyses 2 H2O2 = O2 + 2 H2O. Decomposes hydrogen peroxide into water and oxygen; serves to protect cells from the toxic effects of hydrogen peroxide. The chain is Catalase HPII (katE) from Pseudomonas putida (Arthrobacter siderocapsulatus).